A 380-amino-acid polypeptide reads, in one-letter code: DNA replication and repair protein RecF (380 aa).

ATP is bound at residue 30-37 (GNNAQGKS).

It belongs to the RecF family.

It is found in the cytoplasm. In terms of biological role, the RecF protein is involved in DNA metabolism; it is required for DNA replication and normal SOS inducibility. RecF binds preferentially to single-stranded, linear DNA. It also seems to bind ATP. The protein is DNA replication and repair protein RecF of Rippkaea orientalis (strain PCC 8801 / RF-1) (Cyanothece sp. (strain PCC 8801)).